Here is a 180-residue protein sequence, read N- to C-terminus: MSSASPIRVIGIDPGSNVTGWGVIDGLGQRQQVVEYGTIRLDGKEPLPMRLHQIHAQLVSLIQRLQPHEMAVEEVFVSQNVQSALKLGHARGAAIVAGAQMGLPIAEYTAMQVKKAVVGYGRAEKNQMQEMMRMLLNLDKKPAQDAADGLAIAMCHLNQRQWHQQTLPAAILGLQRGGRA.

Active-site residues include Asp-13, Glu-73, and Asp-145. Mg(2+) contacts are provided by Asp-13, Glu-73, and Asp-145.

This sequence belongs to the RuvC family. As to quaternary structure, homodimer which binds Holliday junction (HJ) DNA. The HJ becomes 2-fold symmetrical on binding to RuvC with unstacked arms; it has a different conformation from HJ DNA in complex with RuvA. In the full resolvosome a probable DNA-RuvA(4)-RuvB(12)-RuvC(2) complex forms which resolves the HJ. Mg(2+) is required as a cofactor.

The protein localises to the cytoplasm. The catalysed reaction is Endonucleolytic cleavage at a junction such as a reciprocal single-stranded crossover between two homologous DNA duplexes (Holliday junction).. The RuvA-RuvB-RuvC complex processes Holliday junction (HJ) DNA during genetic recombination and DNA repair. Endonuclease that resolves HJ intermediates. Cleaves cruciform DNA by making single-stranded nicks across the HJ at symmetrical positions within the homologous arms, yielding a 5'-phosphate and a 3'-hydroxyl group; requires a central core of homology in the junction. The consensus cleavage sequence is 5'-(A/T)TT(C/G)-3'. Cleavage occurs on the 3'-side of the TT dinucleotide at the point of strand exchange. HJ branch migration catalyzed by RuvA-RuvB allows RuvC to scan DNA until it finds its consensus sequence, where it cleaves and resolves the cruciform DNA. The protein is Crossover junction endodeoxyribonuclease RuvC of Magnetococcus marinus (strain ATCC BAA-1437 / JCM 17883 / MC-1).